A 920-amino-acid polypeptide reads, in one-letter code: 3-hydroxy-3-methylglutaryl-coenzyme A reductase (920 aa).

The helical transmembrane segment at 12 to 32 (FCASHPWEVIVALLTITACML) threads the bilayer. A glycan (N-linked (GlcNAc...) asparagine) is linked at N37. A disordered region spans residues 62–85 (GAGSGASGTIPPSSMGGSATSSRH). A compositionally biased stretch (polar residues) spans 71-82 (IPPSSMGGSATS). Residues 106–263 (DVILMTIVRC…MTFYPACLSL (158 aa)) form the SSD domain. Transmembrane regions (helical) follow at residues 107–129 (VILM…CSLH), 136–156 (VLGI…TAII), 170–190 (LFFL…QLAL), 208–228 (LLGP…GVGT), and 237–257 (VLCM…MTFY). 2 N-linked (GlcNAc...) asparagine glycosylation sites follow: N342 and N346. The chain crosses the membrane as a helical span at residues 364–384 (SADHIVISIVLIALVVKFICF). Residues 385 to 498 (DNRDPLPDQL…EEIVSIVHAG (114 aa)) form a linker region. N443 and N475 each carry an N-linked (GlcNAc...) asparagine glycan. A catalytic region spans residues 499 to 829 (GTHCPLHKIE…TCTMPSLEVG (331 aa)). Residues E586, K717, and D793 each act as charge relay system in the active site. N-linked (GlcNAc...) asparagine glycosylation is found at N797 and N802. H892 (proton donor) is an active-site residue. 2 N-linked (GlcNAc...) asparagine glycosylation sites follow: N896 and N910.

Belongs to the HMG-CoA reductase family. Highly expressed in embryonic gonadal mesoderm, where expression is initially broad, and then becomes restricted to a segmental pattern at stage 11. Expression is then further restricted to a cluster of cells in each of parasegments 10, 11 and 12, corresponding to the developing gonadal mesoderm. Not expressed in pole cells.

It is found in the endoplasmic reticulum membrane. It catalyses the reaction (R)-mevalonate + 2 NADP(+) + CoA = (3S)-3-hydroxy-3-methylglutaryl-CoA + 2 NADPH + 2 H(+). It participates in metabolic intermediate biosynthesis; (R)-mevalonate biosynthesis; (R)-mevalonate from acetyl-CoA: step 3/3. With respect to regulation, the activity of HMG-CoA-reductase is suppressed by exogenous mevalonate. In terms of biological role, synthesis of mevalonate for the production of non-sterol isoprenoids, which are essential for growth differentiation. Provides spatial information during embryogenesis to guide migrating primordial germ cells (the pole cells) from the ectoderm to the mesoderm. Also required for association of the pole cells with the gonadal mesoderm. The protein is 3-hydroxy-3-methylglutaryl-coenzyme A reductase (Hmgcr) of Drosophila melanogaster (Fruit fly).